The following is a 57-amino-acid chain: Protein translocase subunit SecE (57 aa).

A helical transmembrane segment spans residues 33 to 53 (GAGIFLVGLLGFIIFAVMSFL).

The protein belongs to the SecE/SEC61-gamma family. Component of the Sec protein translocase complex. Heterotrimer consisting of SecY (alpha), SecG (beta) and SecE (gamma) subunits. The heterotrimers can form oligomers, although 1 heterotrimer is thought to be able to translocate proteins. Interacts with the ribosome. May interact with SecDF, and other proteins may be involved.

The protein resides in the cell membrane. Essential subunit of the Sec protein translocation channel SecYEG. Clamps together the 2 halves of SecY. May contact the channel plug during translocation. This Haloferax mediterranei (strain ATCC 33500 / DSM 1411 / JCM 8866 / NBRC 14739 / NCIMB 2177 / R-4) (Halobacterium mediterranei) protein is Protein translocase subunit SecE.